We begin with the raw amino-acid sequence, 144 residues long: Maximins 3/H11 type 2 (144 aa).

Residues 1–18 (MHFKYIVAVSFLIASAYA) form the signal peptide. 2 propeptides span residues 19–43 (RSVQ…REIR) and 73–122 (RTAE…KKEK). Isoleucine 143 is subject to Isoleucine amide.

Belongs to the bombinin family. As to expression, expressed by the skin glands.

It localises to the secreted. Its function is as follows. Maximin-3 shows antibacterial activity against both Gram-positive and Gram-negative bacteria. It also shows antimicrobial activity against the fungus C.albicans, but not against A.flavus nor P.uticale. It has little hemolytic activity. It possess a significant cytotoxicity against tumor cell lines. It possess a significant anti-HIV activity. It shows high spermicidal activity. Functionally, maximin-H11 shows antimicrobial activity against bacteria and against the fungus C.albicans. Shows strong hemolytic activity. In Bombina maxima (Giant fire-bellied toad), this protein is Maximins 3/H11 type 2.